A 700-amino-acid polypeptide reads, in one-letter code: AP-1-like transcription factor yap1 (700 aa).

Disordered regions lie at residues 17-185 (SPGH…KDLE) and 228-296 (MPVN…VSLR). The Bipartite nuclear localization signal signature appears at 34-41 (MPVPGRDT). Polar residues predominate over residues 47-59 (PSVSNGSQPSAHQ). The short motif at 67–74 (SPTPEMPP) is the Bipartite nuclear localization signal element. Residues 103 to 112 (LDDDDDDASD) are compositionally biased toward acidic residues. Residues 127 to 138 (AGRAAAASASGS) show a composition bias toward low complexity. Residues 150 to 185 (GDGKRELSKSERRKEQNRAAQKAFRERREAKVKDLE) are compositionally biased toward basic and acidic residues. A bZIP domain is found at 156–219 (LSKSERRKEQ…KRLQEENVAL (64 aa)). Residues 158–182 (KSERRKEQNRAAQKAFRERREAKVK) form a basic motif region. The interval 184 to 191 (LEDKVAEL) is leucine-zipper. 2 transcription activation regions span residues 213–400 (QEEN…QPDS) and 452–577 (LGAT…GRGN). The span at 231-244 (NSRNSPNSNNGSFS) shows a compositional bias: low complexity. Residues 280-296 (SANTISDNSSESLVSLR) are compositionally biased toward polar residues. The n-CRD stretch occupies residues 306–318 (FSDHFNTYALGVV). Disordered stretches follow at residues 320–359 (VPPPSSSSQPTQKYPSASNGQQSISSNSNSSNVISPPSAD) and 542–609 (NYLN…KATT). Low complexity-rich tracts occupy residues 335-358 (SASNGQQSISSNSNSSNVISPPSA) and 542-573 (NYLNMSPSPMMPLSNSQSPQSSDSRSNTNVSS). A compositionally biased stretch (polar residues) spans 589-607 (MGSSRTSVSHDSTDLQGKA). A c-CRD region spans residues 642 to 675 (PSELWMRFGMQHENSTEHLLIDDLCDQMRAKATC). Positions 660–667 (LLIDDLCD) match the Nuclear export signal motif. A disulfide bridge links C666 with C675.

This sequence belongs to the bZIP family. YAP subfamily. Post-translationally, depending on the oxidative stress inducing agent, yap1 can undergo two distinct conformational changes, both involving disulfide bond formation, and both masking the nuclear export signal, thus abolishing nuclear export.

The protein localises to the nucleus. It localises to the cytoplasm. Its function is as follows. Transcription activator involved in oxidative stress response and redox homeostasis. Regulates the transcription of genes encoding antioxidant enzymes and components of the cellular thiol-reducing pathways. Involved in antifungal resistance to fluconazole. The chain is AP-1-like transcription factor yap1 from Cryptococcus neoformans var. grubii serotype A (strain H99 / ATCC 208821 / CBS 10515 / FGSC 9487) (Filobasidiella neoformans var. grubii).